A 233-amino-acid chain; its full sequence is Transmembrane protein 40 (233 aa).

Met-1 bears the N-acetylmethionine mark. Over residues 1 to 14 the composition is skewed to polar residues; it reads METSASSSQPQDNS. Positions 1–143 are disordered; that stretch reads METSASSSQP…RRGSDPASGE (143 aa). Residues 50-70 show a composition bias toward low complexity; it reads SSSSSSSSSSSSSSSSSSSSS. Over residues 93–104 the composition is skewed to gly residues; it reads YPHGNGSPGPGH. Positions 105–114 are enriched in basic and acidic residues; the sequence is GEPDVLKDEL. Ser-137 is modified (phosphoserine). 2 helical membrane-spanning segments follow: residues 160–180 and 187–207; these read FFHFVLLCFAIGALLVCYHYY and LGVGLLTFASLETVGIYFGLV.

It is found in the membrane. This Homo sapiens (Human) protein is Transmembrane protein 40 (TMEM40).